Here is an 848-residue protein sequence, read N- to C-terminus: Translation initiation factor IF-2 (848 aa).

Positions 1–265 (MSDTDGKKPL…GNQRAEKQVR (265 aa)) are disordered. A compositionally biased stretch (basic and acidic residues) spans 89-162 (KAREVEEAAQ…AEIAKPKTEA (74 aa)). Residues 163–179 (RPATPADRAAAEAAAVR) show a composition bias toward low complexity. Residues 191–219 (RKTDRDRDTRGGGGDDRDSRNKGRDDSRR) are compositionally biased toward basic and acidic residues. Residues 346 to 514 (PRAPIITIMG…AIALQAEILE (169 aa)) enclose the tr-type G domain. Positions 355-362 (GHVDHGKT) are G1. 355 to 362 (GHVDHGKT) contributes to the GTP binding site. Positions 380-384 (GITQH) are G2. A G3 region spans residues 402–405 (DTPG). Residues 402–406 (DTPGH) and 456–459 (NKID) each bind GTP. Positions 456 to 459 (NKID) are G4. The segment at 492-494 (SAK) is G5.

This sequence belongs to the TRAFAC class translation factor GTPase superfamily. Classic translation factor GTPase family. IF-2 subfamily.

Its subcellular location is the cytoplasm. Functionally, one of the essential components for the initiation of protein synthesis. Protects formylmethionyl-tRNA from spontaneous hydrolysis and promotes its binding to the 30S ribosomal subunits. Also involved in the hydrolysis of GTP during the formation of the 70S ribosomal complex. The sequence is that of Translation initiation factor IF-2 from Paracoccus denitrificans (strain Pd 1222).